We begin with the raw amino-acid sequence, 516 residues long: Arabinose import ATP-binding protein AraG (516 aa).

ABC transporter domains lie at 5–240 (LRFD…MVGR) and 240–497 (REIS…LPQS). Residue 37 to 44 (GENGAGKS) participates in ATP binding.

It belongs to the ABC transporter superfamily. Arabinose importer (TC 3.A.1.2.2) family. As to quaternary structure, the complex is composed of two ATP-binding proteins (AraG), two transmembrane proteins (AraH) and a solute-binding protein (AraF).

The protein resides in the cell inner membrane. It catalyses the reaction L-arabinose(out) + ATP + H2O = L-arabinose(in) + ADP + phosphate + H(+). In terms of biological role, part of the ABC transporter complex AraFGH involved in arabinose import. Responsible for energy coupling to the transport system. The sequence is that of Arabinose import ATP-binding protein AraG from Paraburkholderia xenovorans (strain LB400).